Here is a 208-residue protein sequence, read N- to C-terminus: Probable acyl-homoserine-lactone synthase (208 aa).

It belongs to the autoinducer synthase family.

It catalyses the reaction a fatty acyl-[ACP] + S-adenosyl-L-methionine = an N-acyl-L-homoserine lactone + S-methyl-5'-thioadenosine + holo-[ACP] + H(+). In terms of biological role, required for the synthesis of OHHL (N-(3-oxooctanoyl)-L-homoserine lactone), an autoinducer molecule which binds to TraR and thus acts in the control of conjugal transfer. In Sinorhizobium fredii (strain NBRC 101917 / NGR234), this protein is Probable acyl-homoserine-lactone synthase (traI).